The primary structure comprises 478 residues: ATP synthase subunit beta (478 aa).

164 to 171 (GGAGVGKT) serves as a coordination point for ATP.

It belongs to the ATPase alpha/beta chains family. In terms of assembly, F-type ATPases have 2 components, CF(1) - the catalytic core - and CF(0) - the membrane proton channel. CF(1) has five subunits: alpha(3), beta(3), gamma(1), delta(1), epsilon(1). CF(0) has three main subunits: a(1), b(2) and c(9-12). The alpha and beta chains form an alternating ring which encloses part of the gamma chain. CF(1) is attached to CF(0) by a central stalk formed by the gamma and epsilon chains, while a peripheral stalk is formed by the delta and b chains.

It localises to the cell membrane. It catalyses the reaction ATP + H2O + 4 H(+)(in) = ADP + phosphate + 5 H(+)(out). Functionally, produces ATP from ADP in the presence of a proton gradient across the membrane. The catalytic sites are hosted primarily by the beta subunits. This Streptomyces avermitilis (strain ATCC 31267 / DSM 46492 / JCM 5070 / NBRC 14893 / NCIMB 12804 / NRRL 8165 / MA-4680) protein is ATP synthase subunit beta.